Consider the following 319-residue polypeptide: Coproporphyrin III ferrochelatase 2 (319 aa).

Residues Y13, R30, 46 to 47, S54, and Y125 contribute to the Fe-coproporphyrin III site; that span reads RY. The Fe(2+) site is built by H181 and E262.

It belongs to the ferrochelatase family.

The protein resides in the cytoplasm. The catalysed reaction is Fe-coproporphyrin III + 2 H(+) = coproporphyrin III + Fe(2+). Its pathway is porphyrin-containing compound metabolism; protoheme biosynthesis. Involved in coproporphyrin-dependent heme b biosynthesis. Catalyzes the insertion of ferrous iron into coproporphyrin III to form Fe-coproporphyrin III. The sequence is that of Coproporphyrin III ferrochelatase 2 from Bacillus thuringiensis subsp. konkukian (strain 97-27).